A 304-amino-acid chain; its full sequence is MAKQLSIPSATSGSKSHSLAWRPYYEMTKPKVVALMLLTVLVGMCLAVPGSVPLQPLVIGMIGIGMMAGAAAAFNHLIDRKIDGLMARTYNRPLPKGRVSIPKALTFAISLAALGFVLLYTLVNELTAWLTFASLIGYALVYTAYLKRATPQNIVVGGLAGAMPPLLGWTSVTGEFHGHALLLVIIIFAWTPPHFWALAIHRKAEYAKVDIPMLPVTHGTEFTKTCILLYTVLLAIACLLPVLVGMCGPVYLVGSTLLSCGFIYKAWELKFDDKPGLAMQVFRFSIYHLMLLFLVLLVDHYLWV.

A run of 9 helical transmembrane segments spans residues 32-52, 54-74, 104-124, 126-146, 154-174, 180-200, 226-246, 247-267, and 284-304; these read VVALMLLTVLVGMCLAVPGSV, LQPLVIGMIGIGMMAGAAAAF, ALTFAISLAALGFVLLYTLVN, LTAWLTFASLIGYALVYTAYL, IVVGGLAGAMPPLLGWTSVTG, ALLLVIIIFAWTPPHFWALAI, CILLYTVLLAIACLLPVLVGM, CGPVYLVGSTLLSCGFIYKAW, and FSIYHLMLLFLVLLVDHYLWV.

This sequence belongs to the UbiA prenyltransferase family. Protoheme IX farnesyltransferase subfamily.

The protein localises to the cell inner membrane. It catalyses the reaction heme b + (2E,6E)-farnesyl diphosphate + H2O = Fe(II)-heme o + diphosphate. It participates in porphyrin-containing compound metabolism; heme O biosynthesis; heme O from protoheme: step 1/1. Functionally, converts heme B (protoheme IX) to heme O by substitution of the vinyl group on carbon 2 of heme B porphyrin ring with a hydroxyethyl farnesyl side group. The polypeptide is Protoheme IX farnesyltransferase (Shewanella sediminis (strain HAW-EB3)).